Consider the following 427-residue polypeptide: Trigger factor (427 aa).

The PPIase FKBP-type domain maps to 163 to 248 (GDTVVIDFVG…IHEVKTKEVP (86 aa)).

Belongs to the FKBP-type PPIase family. Tig subfamily.

The protein localises to the cytoplasm. It catalyses the reaction [protein]-peptidylproline (omega=180) = [protein]-peptidylproline (omega=0). Functionally, involved in protein export. Acts as a chaperone by maintaining the newly synthesized protein in an open conformation. Functions as a peptidyl-prolyl cis-trans isomerase. This chain is Trigger factor, found in Streptococcus agalactiae serotype III (strain NEM316).